The following is a 349-amino-acid chain: tRNA pseudouridine synthase D (349 aa).

F27 is a substrate binding site. Residue D80 is the Nucleophile of the active site. Residue N129 coordinates substrate. In terms of domain architecture, TRUD spans 155-303 (GVPNYFGAQR…VEAARRAMLL (149 aa)). Residue F329 coordinates substrate.

This sequence belongs to the pseudouridine synthase TruD family.

It carries out the reaction uridine(13) in tRNA = pseudouridine(13) in tRNA. Its function is as follows. Responsible for synthesis of pseudouridine from uracil-13 in transfer RNAs. In Escherichia coli O45:K1 (strain S88 / ExPEC), this protein is tRNA pseudouridine synthase D.